A 3672-amino-acid chain; its full sequence is Laminin-like protein epi-1 (3672 aa).

Positions 1–27 (MSPYDSSPWATKALFLIVTLLAQFTYS) are cleaved as a signal peptide. The Laminin N-terminal domain occupies 28–297 (QVLTPSQITI…AIKEIMIGGR (270 aa)). Residues N121, N140, and N249 are each glycosylated (N-linked (GlcNAc...) asparagine). 43 disulfide bridges follow: C298-C307, C300-C320, C322-C331, C334-C354, C357-C366, C359-C391, C394-C403, C406-C424, C427-C438, C429-C445, C447-C456, C459-C469, C472-C484, C474-C491, C493-C502, C505-C516, C519-C531, C521-C538, C540-C549, C552-C561, C564-C576, C566-C583, C585-C594, C597-C607, C610-C622, C612-C629, C631-C640, C643-C653, C656-C668, C658-C674, C676-C685, C688-C698, C701-C715, C703-C724, C726-C735, C738-C753, C756-C770, C758-C777, C779-C788, C791-C806, C809-C821, C811-C828, and C830-C839. Laminin EGF-like domains follow at residues 298 to 356 (CVCN…TCEA), 357 to 426 (CNCF…PCKV), 427 to 471 (CDCD…KCKP), 472 to 518 (CECN…GCVE), 519 to 563 (CVCD…DCKF), 564 to 609 (CNCD…NCKA), 610 to 655 (CACD…DCRG), 656 to 700 (CECL…ICEE), 701 to 755 (CNCN…GCRS), and 756 to 808 (CDCN…GCES). Residue N351 is glycosylated (N-linked (GlcNAc...) asparagine). N477 carries N-linked (GlcNAc...) asparagine glycosylation. Residues N511 and N530 are each glycosylated (N-linked (GlcNAc...) asparagine). N634 is a glycosylation site (N-linked (GlcNAc...) asparagine). N-linked (GlcNAc...) asparagine glycosylation occurs at N761. Residues 809–839 (CHCDIGGALRAECDITSGQCKCRPRVTGLRC) form the Laminin EGF-like 11; truncated domain. N1014 and N1341 each carry an N-linked (GlcNAc...) asparagine glycan. Disulfide bonds link C1415–C1427, C1417–C1434, C1436–C1445, C1448–C1458, C1461–C1469, C1463–C1476, C1478–C1487, C1490–C1503, C1506–C1520, C1508–C1527, C1529–C1538, C1541–C1551, C1554–C1566, C1556–C1573, C1575–C1584, and C1587–C1602. Laminin EGF-like domains follow at residues 1415-1460 (CDCV…ECIK), 1461-1505 (CQCN…GCQK), 1506-1553 (CGCH…HCYG), and 1554-1604 (CSCN…GCVN). Residues 1605–1614 (CFCFGVTDSC) enclose the Laminin EGF-like 16; first part domain. A Laminin IV type A domain is found at 1615 to 1796 (RSSMYPVTIM…SVIKASSVEQ (182 aa)). Residues N1705 and N1756 are each glycosylated (N-linked (GlcNAc...) asparagine). The 33-residue stretch at 1797-1829 (CQCPAPYTGPSCQLCASGYHRVQSGSFLGACVP) folds into the Laminin EGF-like 16; second part domain. 24 disulfide bridges follow: C1830/C1839, C1832/C1846, C1849/C1858, C1861/C1877, C1880/C1894, C1882/C1905, C1907/C1916, C1919/C1934, C1937/C1951, C1939/C1958, C1961/C1970, C1973/C1987, C1990/C2000, C1992/C2007, C2009/C2018, C2021/C2031, C2037/C2048, C2039/C2055, C2057/C2066, C2069/C2081, C2084/C2096, C2086/C2103, C2105/C2114, and C2117/C2129. Laminin EGF-like domains follow at residues 1830-1879 (CECN…DCMA), 1880-1936 (CACP…SCSP), 1937-1989 (CQCN…NCSS), 1990-2036 (CECS…GCQG), 2037-2083 (CHCG…GCDK), and 2084-2131 (CDCE…GCRR). A glycan (N-linked (GlcNAc...) asparagine) is linked at N1868. A glycan (N-linked (GlcNAc...) asparagine) is linked at N1944. Residue N1986 is glycosylated (N-linked (GlcNAc...) asparagine). N-linked (GlcNAc...) asparagine glycosylation occurs at N2002. N-linked (GlcNAc...) asparagine glycosylation is found at N2159, N2207, N2231, N2235, N2401, N2421, N2487, and N2821. 3 consecutive Laminin G-like domains span residues 2693-2884 (GAHF…VNGA), 2896-3066 (ELVV…RSGC), and 3072-3235 (RTVS…LNGC). Cysteines 3040 and 3066 form a disulfide. An N-linked (GlcNAc...) asparagine glycan is attached at N3087. The cysteines at positions 3209 and 3235 are disulfide-linked. A disordered region spans residues 3236 to 3294 (SLSDDENISTTTTAAPKPTDDSDVAVLPIDEEEESTTTTTTTTTEEPTEEPAEARPDGH). N-linked (GlcNAc...) asparagine glycosylation occurs at N3242. The span at 3271-3280 (TTTTTTTTTE) shows a compositional bias: low complexity. Laminin G-like domains follow at residues 3310–3482 (GFNF…TEQC) and 3488–3669 (PGMY…RNAC). A disulfide bond links C3460 and C3482. Residue N3541 is glycosylated (N-linked (GlcNAc...) asparagine). A disulfide bridge connects residues C3633 and C3669.

In terms of assembly, laminin is a complex glycoprotein, consisting of three different polypeptide chains (alpha, beta, gamma), which are bound to each other by disulfide bonds into a cross-shaped molecule comprising one long and three short arms with globules at each end.

It localises to the secreted. Its subcellular location is the extracellular space. The protein resides in the extracellular matrix. It is found in the basement membrane. Binding to cells via a high affinity receptor, laminin is thought to mediate the attachment, migration and organization of cells into tissues during embryonic development by interacting with other extracellular matrix components. Required to assemble a stable basement membrane and for organizing receptor complexes and cytoskeletal components to the proper cell surfaces. During embryogenesis, does not require the presence of collagen type IV in order to associate with cell surfaces, prior to assembly of the prototypical basement membrane. During the formation of neuromuscular junctions at the larval stage, negatively regulates membrane protrusion from body wall muscles, probably downstream of the integrin complex formed by pat-2 and pat-3. Probably plays a distinct role from the related laminin subunit alpha lam-3. This chain is Laminin-like protein epi-1 (epi-1), found in Caenorhabditis elegans.